We begin with the raw amino-acid sequence, 1070 residues long: DNA-directed RNA polymerase subunit beta (1070 aa).

This sequence belongs to the RNA polymerase beta chain family. In plastids the minimal PEP RNA polymerase catalytic core is composed of four subunits: alpha, beta, beta', and beta''. When a (nuclear-encoded) sigma factor is associated with the core the holoenzyme is formed, which can initiate transcription.

Its subcellular location is the plastid. It localises to the chloroplast. The catalysed reaction is RNA(n) + a ribonucleoside 5'-triphosphate = RNA(n+1) + diphosphate. DNA-dependent RNA polymerase catalyzes the transcription of DNA into RNA using the four ribonucleoside triphosphates as substrates. The chain is DNA-directed RNA polymerase subunit beta from Solanum bulbocastanum (Wild potato).